A 673-amino-acid polypeptide reads, in one-letter code: MFNLNTKSSKEPEVTEVAVDSTPSSPVTRESSPESSPDNSAVDLEKGKKSKFEMHDQTNLLPRSQLFLVFGAMAFCMLVSFMDQNGISVALPDIAKDLNATDTISWAGTSGLIANTVFQVLYGRLSDIFGRKLVFMIVVCTLVCADIGCACAQTSTQLYIFRAFSGIANGGMSCLTMIVVSDIVTLKERGKYQGILGACVGLGNTIGPFLGAAFTENVSWRAIFYLLAPMGGLCAVVIFFILPSKKPQGSAIQKAKAIDYPGLFCSSVALVFLLVPIAGGGSYYEWDSPMVISMLCIGGVFFIAFFVIEGFFAKLPMMPLRIFGTKALFALMMHSVLLGIAYYGDLYYLPMYMRNIRGWSSMKAAGMSCALVTTQAVTTVISGQYLSRMGRYLEVIYFGFGIWTVGAIMKCFWKRDSNMALLIFSLLFEGAGVGCCFQPTLVAAQALSRKEDRSVVISSRNFLRSFGGAVGLAVCSAILANSLKADLKTKNLPSELYELIVKAPFSLPDLSHYPEYRDQVLDAYMNGSHTVFVFLCPIVGACLLVTVFVKDHGLQTHEKKAAEAKTVEDKDKDESGTDCEDMTKGEVLVSEKEGKLSRNSSSQSMHFGDHTAVNTPAPTGYNTPVVGTLCHNSPNFPPMDHNDVITPLEDFDESPLPPHSPNSSGKRVTIQEE.

A disordered region spans residues Met-1–Leu-44. Residues Ser-21 to Asn-39 are compositionally biased toward polar residues. The helical transmembrane segment at Phe-67–Ile-87 threads the bilayer. A glycan (N-linked (GlcNAc...) asparagine) is linked at Asn-99. The next 4 membrane-spanning stretches (helical) occupy residues Thr-103–Gly-123, Leu-133–Gln-153, Phe-164–Val-184, and Gly-194–Phe-214. A glycan (N-linked (GlcNAc...) asparagine) is linked at Asn-217. A run of 8 helical transmembrane segments spans residues Ala-222–Leu-242, Pro-261–Gly-281, Ile-292–Phe-312, Ile-322–Tyr-342, Ala-364–Gln-384, Leu-393–Trp-413, Met-419–Pro-439, and Ser-465–Ala-485. N-linked (GlcNAc...) asparagine glycosylation is present at Asn-526. Residues His-529 to Val-549 traverse the membrane as a helical segment. Residues Ala-564–Leu-596 show a composition bias toward basic and acidic residues. Disordered regions lie at residues Ala-564–Gly-608 and Phe-636–Glu-673. Asn-599 and Asn-662 each carry an N-linked (GlcNAc...) asparagine glycan.

Belongs to the major facilitator superfamily.

The protein resides in the cell membrane. The enzyme catalyses citrate(in) = citrate(out). In terms of biological role, transmembrane transporter that exports citrate across the cell membrane. The polypeptide is Citrate exporter 1 (Yarrowia lipolytica (strain CLIB 122 / E 150) (Yeast)).